The chain runs to 523 residues: Frizzled-2 (523 aa).

The FZ domain occupies 1–120 (PDHGFCQPIS…HGAEQICVGQ (120 aa)). Residues 1 to 205 (PDHGFCQPIS…EDEIRFARVW (205 aa)) lie on the Extracellular side of the membrane. 5 disulfides stabilise this stretch: cysteine 6–cysteine 67, cysteine 14–cysteine 60, cysteine 51–cysteine 88, cysteine 77–cysteine 117, and cysteine 81–cysteine 105. Asparagine 20 is a glycosylation site (N-linked (GlcNAc...) asparagine). Residue asparagine 121 is glycosylated (N-linked (GlcNAc...) asparagine). A helical membrane pass occupies residues 206-226 (ILVWSVLCCASTFFTVTTYLV). The Cytoplasmic segment spans residues 227-237 (DMQRFRYPERP). Residues 238–258 (IIFLSGCYTMVSVAYIAGFVL) traverse the membrane as a helical segment. Topologically, residues 259 to 285 (EERVVCNERFQEDGYRTVVQGTKKEGC) are extracellular. A helical transmembrane segment spans residues 286 to 306 (TILFMMLYFFSMASSIWWVIL). The Cytoplasmic segment spans residues 307 to 328 (SLTWFLAAGMKWGHEAIEANSQ). Residues 329-349 (YFHLAAWAVPAVKTITILAMG) traverse the membrane as a helical segment. The Extracellular portion of the chain corresponds to 350-372 (QIDGDLLSGVCFVGLNGIDPLRG). Residues 373-393 (FVLAPLFVYLFIGTSFLLAGF) traverse the membrane as a helical segment. The Cytoplasmic segment spans residues 394–419 (VSLFRIRTIMKHGGTKTEKLERLMVR). The chain crosses the membrane as a helical span at residues 420 to 440 (IGVFSVLYTVPATIVIACYFY). The Extracellular segment spans residues 441–477 (EQAFRQHWERSWISQHCKSLAIPCPLHFTPRMTPDFT). A helical membrane pass occupies residues 478–498 (VYMIKYLMTLIVGITSGFWIF). Residues 499–523 (SGKTLHSWRKFYTRLTNSRQGETTV) are Cytoplasmic-facing. Residues 501–506 (KTLHSW) carry the Lys-Thr-X-X-X-Trp motif, mediates interaction with the PDZ domain of Dvl family members motif. The short motif at 521-523 (TTV) is the PDZ-binding element.

The protein belongs to the G-protein coupled receptor Fz/Smo family. As to expression, expressed in the developing head and limbs. Expressed broadly in cranial ectoderm. Also expressed in the developing somites (dermomyotome) and in other cranial placodes, including the olfactory, lens, and otic placodes (rostral rim of the vesicle).

Its subcellular location is the membrane. It localises to the cell membrane. Receptor for Wnt proteins. Most of frizzled receptors are coupled to the beta-catenin canonical signaling pathway, which leads to the activation of disheveled proteins, inhibition of GSK-3 kinase, nuclear accumulation of beta-catenin and activation of Wnt target genes. A second signaling pathway involving PKC and calcium fluxes has been seen for some family members, but it is not yet clear if it represents a distinct pathway or if it can be integrated in the canonical pathway, as PKC seems to be required for Wnt-mediated inactivation of GSK-3 kinase. Both pathways seem to involve interactions with G-proteins. May be involved in transduction and intercellular transmission of polarity information during tissue morphogenesis and/or in differentiated tissues. The chain is Frizzled-2 (FZD2) from Gallus gallus (Chicken).